The sequence spans 317 residues: Transaldolase (317 aa).

Catalysis depends on K132, which acts as the Schiff-base intermediate with substrate.

It belongs to the transaldolase family. Type 1 subfamily. As to quaternary structure, homodimer.

The protein resides in the cytoplasm. It catalyses the reaction D-sedoheptulose 7-phosphate + D-glyceraldehyde 3-phosphate = D-erythrose 4-phosphate + beta-D-fructose 6-phosphate. The protein operates within carbohydrate degradation; pentose phosphate pathway; D-glyceraldehyde 3-phosphate and beta-D-fructose 6-phosphate from D-ribose 5-phosphate and D-xylulose 5-phosphate (non-oxidative stage): step 2/3. In terms of biological role, transaldolase is important for the balance of metabolites in the pentose-phosphate pathway. In Shigella dysenteriae serotype 1 (strain Sd197), this protein is Transaldolase.